A 344-amino-acid polypeptide reads, in one-letter code: MDYKSAGVDVEAGRHFVERIRTSVEATHRPEVLGGLGGFGGLCRLPAGLEKPLLVAGTDGVGTKLELAQECGRHHGVGIDLVAMCANDVITCGAEPLFFLDYIATGKLSPAAMAEVVEGIASGCSQSGCSLLGGETAEMPGFYPAGRYDLAGFCVAVVDEPRLIDGQTIQAGDQLLAIASSGVHSNGFSLVRRILEANQVPLETSQAALGGRSAAEALLEPTLLYAPLVKALLQSPELELRGMAHITGGGLPENLPRPLPQGLAAQIDPGSWQRPALFHWLQELGSVPERDLWHTFNLGIGYVLVLPESSCQQALEVVHNSGFTGWICGEIVVGQGVLGLPAGA.

The protein belongs to the AIR synthase family.

It localises to the cytoplasm. The enzyme catalyses 2-formamido-N(1)-(5-O-phospho-beta-D-ribosyl)acetamidine + ATP = 5-amino-1-(5-phospho-beta-D-ribosyl)imidazole + ADP + phosphate + H(+). It functions in the pathway purine metabolism; IMP biosynthesis via de novo pathway; 5-amino-1-(5-phospho-D-ribosyl)imidazole from N(2)-formyl-N(1)-(5-phospho-D-ribosyl)glycinamide: step 2/2. The protein is Phosphoribosylformylglycinamidine cyclo-ligase of Synechococcus sp. (strain RCC307).